The following is a 226-amino-acid chain: MKLILMMNLFEMFDPSTSNNLSMNWLFMMLPIIIFPSIFWLIQSRIMFIMKTLMNFMYNEFKVVSKSKYQSNIIIFISLMLYIMITNIFSLIPYVFTLTSHLLLNMILSLTLWFSFLIYLIYNNYIMFLSHLVPLNSPVFLMNFMVIIELISLIIRPWTLSIRLSANLISGHLILTLLGIFISNFISILPINLMIQNMLLTLEIFMSMIQSYVFSILLILYFSESN.

Helical transmembrane passes span 22-42 (SMNW…FWLI), 73-93 (IIIF…SLIP), 102-122 (LLLN…YLIY), 135-155 (LNSP…SLII), 173-193 (LILT…PINL), and 202-222 (LEIF…ILYF).

This sequence belongs to the ATPase A chain family. As to quaternary structure, F-type ATPases have 2 components, CF(1) - the catalytic core - and CF(0) - the membrane proton channel. CF(1) has five subunits: alpha(3), beta(3), gamma(1), delta(1), epsilon(1). CF(0) has three main subunits: a, b and c.

Its subcellular location is the mitochondrion inner membrane. In terms of biological role, mitochondrial membrane ATP synthase (F(1)F(0) ATP synthase or Complex V) produces ATP from ADP in the presence of a proton gradient across the membrane which is generated by electron transport complexes of the respiratory chain. F-type ATPases consist of two structural domains, F(1) - containing the extramembraneous catalytic core and F(0) - containing the membrane proton channel, linked together by a central stalk and a peripheral stalk. During catalysis, ATP synthesis in the catalytic domain of F(1) is coupled via a rotary mechanism of the central stalk subunits to proton translocation. Key component of the proton channel; it may play a direct role in the translocation of protons across the membrane. This is ATP synthase subunit a (ATP6) from Apis mellifera ligustica (Common honeybee).